The chain runs to 633 residues: Chaperone protein DnaK (633 aa).

Phosphothreonine; by autocatalysis is present on Thr198.

It belongs to the heat shock protein 70 family.

In terms of biological role, acts as a chaperone. This is Chaperone protein DnaK from Rhodopseudomonas palustris (strain BisA53).